The sequence spans 147 residues: Large ribosomal subunit protein bL9 (147 aa).

This sequence belongs to the bacterial ribosomal protein bL9 family.

Functionally, binds to the 23S rRNA. The chain is Large ribosomal subunit protein bL9 from Helicobacter hepaticus (strain ATCC 51449 / 3B1).